Reading from the N-terminus, the 357-residue chain is Cytosolic Fe-S cluster assembly factor NAR1 (357 aa).

[4Fe-4S] cluster contacts are provided by cysteine 14, cysteine 28, cysteine 31, cysteine 34, cysteine 129, cysteine 172, cysteine 297, and cysteine 301.

It belongs to the NARF family.

Component of the cytosolic Fe/S protein assembly machinery. May play a role in the transfer of pre-assembled Fe/S clusters to target apoproteins. In Encephalitozoon cuniculi (strain GB-M1) (Microsporidian parasite), this protein is Cytosolic Fe-S cluster assembly factor NAR1 (NAR1).